The following is a 328-amino-acid chain: Fructose-1,6-bisphosphatase class 1 (328 aa).

Mg(2+)-binding residues include glutamate 91, aspartate 110, leucine 112, and aspartate 113. Substrate-binding positions include 113-116, asparagine 205, and 257-259; these read DGSS and YLY. Glutamate 277 serves as a coordination point for Mg(2+).

It belongs to the FBPase class 1 family. In terms of assembly, homotetramer. The cofactor is Mg(2+).

The protein localises to the cytoplasm. It catalyses the reaction beta-D-fructose 1,6-bisphosphate + H2O = beta-D-fructose 6-phosphate + phosphate. It participates in carbohydrate biosynthesis; gluconeogenesis. This chain is Fructose-1,6-bisphosphatase class 1, found in Azorhizobium caulinodans (strain ATCC 43989 / DSM 5975 / JCM 20966 / LMG 6465 / NBRC 14845 / NCIMB 13405 / ORS 571).